Here is a 202-residue protein sequence, read N- to C-terminus: dITP/XTP pyrophosphatase (202 aa).

Substrate is bound at residue 7-12 (TTNEGK). Mg(2+) contacts are provided by E37 and D66. D66 (proton acceptor) is an active-site residue. Substrate contacts are provided by residues S67, 155 to 158 (FGYD), K178, and 183 to 184 (HR).

The protein belongs to the HAM1 NTPase family. Homodimer. Requires Mg(2+) as cofactor.

It carries out the reaction XTP + H2O = XMP + diphosphate + H(+). The catalysed reaction is dITP + H2O = dIMP + diphosphate + H(+). The enzyme catalyses ITP + H2O = IMP + diphosphate + H(+). Its function is as follows. Pyrophosphatase that catalyzes the hydrolysis of nucleoside triphosphates to their monophosphate derivatives, with a high preference for the non-canonical purine nucleotides XTP (xanthosine triphosphate), dITP (deoxyinosine triphosphate) and ITP. Seems to function as a house-cleaning enzyme that removes non-canonical purine nucleotides from the nucleotide pool, thus preventing their incorporation into DNA/RNA and avoiding chromosomal lesions. The chain is dITP/XTP pyrophosphatase from Aquifex aeolicus (strain VF5).